Reading from the N-terminus, the 432-residue chain is Ribosomal protein uS12 methylthiotransferase RimO (432 aa).

Residues 4–122 (NTIDIITLGC…LLADLGKAYK (119 aa)) enclose the MTTase N-terminal domain. [4Fe-4S] cluster contacts are provided by C13, C51, C85, C146, C150, and C153. Residues 132 to 363 (TTPHHYAYLK…MALQQEIAGE (232 aa)) form the Radical SAM core domain. Residues 366 to 432 (QTKIGKEFKV…DDFDLYASIL (67 aa)) enclose the TRAM domain.

Belongs to the methylthiotransferase family. RimO subfamily. [4Fe-4S] cluster is required as a cofactor.

It is found in the cytoplasm. It carries out the reaction L-aspartate(89)-[ribosomal protein uS12]-hydrogen + (sulfur carrier)-SH + AH2 + 2 S-adenosyl-L-methionine = 3-methylsulfanyl-L-aspartate(89)-[ribosomal protein uS12]-hydrogen + (sulfur carrier)-H + 5'-deoxyadenosine + L-methionine + A + S-adenosyl-L-homocysteine + 2 H(+). Catalyzes the methylthiolation of an aspartic acid residue of ribosomal protein uS12. The polypeptide is Ribosomal protein uS12 methylthiotransferase RimO (Phocaeicola vulgatus (strain ATCC 8482 / DSM 1447 / JCM 5826 / CCUG 4940 / NBRC 14291 / NCTC 11154) (Bacteroides vulgatus)).